We begin with the raw amino-acid sequence, 180 residues long: MAVRPIRLFGDPVLRTPAEPVTDFDKELRVLIKDLIETMQDAPGVGLAAPQIGVSLRVFVYDVDGVVGHLVNPSLDLSEEQQDGDEGCLSLPGLSYPLKRAKRAVAKGFNEFGEPVILEGSDLLARCVQHETDHLDGVLFIDRLDPEQRKLAMRAIREAEWAGQTVRVKTSPHPTRGKAL.

The Fe cation site is built by Cys-88 and His-130. The active site involves Glu-131. Position 134 (His-134) interacts with Fe cation.

Belongs to the polypeptide deformylase family. It depends on Fe(2+) as a cofactor.

It catalyses the reaction N-terminal N-formyl-L-methionyl-[peptide] + H2O = N-terminal L-methionyl-[peptide] + formate. In terms of biological role, removes the formyl group from the N-terminal Met of newly synthesized proteins. Requires at least a dipeptide for an efficient rate of reaction. N-terminal L-methionine is a prerequisite for activity but the enzyme has broad specificity at other positions. This Acidothermus cellulolyticus (strain ATCC 43068 / DSM 8971 / 11B) protein is Peptide deformylase.